The primary structure comprises 284 residues: Aliphatic sulfonates import ATP-binding protein SsuB (284 aa).

In terms of domain architecture, ABC transporter spans 21 to 242 (LRIAHAVKRY…HRGAPAFARL (222 aa)). 53–60 (GRSGCGKS) contributes to the ATP binding site.

This sequence belongs to the ABC transporter superfamily. Aliphatic sulfonates importer (TC 3.A.1.17.2) family. The complex is composed of two ATP-binding proteins (SsuB), two transmembrane proteins (SsuC) and a solute-binding protein (SsuA).

It localises to the cell inner membrane. It carries out the reaction ATP + H2O + aliphatic sulfonate-[sulfonate-binding protein]Side 1 = ADP + phosphate + aliphatic sulfonateSide 2 + [sulfonate-binding protein]Side 1.. Part of the ABC transporter complex SsuABC involved in aliphatic sulfonates import. Responsible for energy coupling to the transport system. This Ralstonia nicotianae (strain ATCC BAA-1114 / GMI1000) (Ralstonia solanacearum) protein is Aliphatic sulfonates import ATP-binding protein SsuB.